Here is a 337-residue protein sequence, read N- to C-terminus: Vegetative-specific protein H5 (337 aa).

An Involved in the stabilization of the negatively charged intermediate by the formation of the oxyanion hole motif is present at residues 88–90 (HGG). Residues serine 161, aspartate 261, and histidine 291 contribute to the active site.

The protein belongs to the 'GDXG' lipolytic enzyme family.

The chain is Vegetative-specific protein H5 (cinB) from Dictyostelium discoideum (Social amoeba).